The following is a 153-amino-acid chain: Partner of bursicon (153 aa).

The signal sequence occupies residues 1 to 35 (MCNSVRTALAASNCCSIVLCCVLLLTLTLTVAVTA). 5 cysteine pairs are disulfide-bonded: C44/C102, C68/C117, C77/C143, C81/C145, and C99/C148. Residues 44–139 (CETLPSEIHL…SATMEIRLKE (96 aa)) form the CTCK domain.

In terms of assembly, heterodimer of burs and pburs.

Its subcellular location is the secreted. Final heterodimeric neurohormone released at the end of the molting cycle, involved in the sclerotization (tanning) of the insect cuticle, melanization and wing spreading. This Anopheles gambiae (African malaria mosquito) protein is Partner of bursicon.